The sequence spans 890 residues: Leucine-rich repeat receptor-like tyrosine-protein kinase PXC3 (890 aa).

The N-terminal stretch at 1 to 23 is a signal peptide; that stretch reads MTFWCMSILLIVGFLSKSELCEA. Over 24–534 the chain is Extracellular; sequence QLSDEATLVA…LRYNHRVSYR (511 aa). N-linked (GlcNAc...) asparagine glycosylation is found at Asn-46, Asn-61, Asn-78, and Asn-108. LRR repeat units lie at residues 67-85, 86-108, 110-132, 133-157, 159-181, 182-205, 206-229, 231-254, 256-276, 278-300, 301-325, 326-349, 350-373, 375-397, 399-421, 422-446, 447-469, and 471-492; these read MLDL…ISDL, RSLK…SFGN, SELE…EFGK, LRGL…LKVL, RLEE…VGNL, SSLR…LGLV, SELE…IFEK, KLKV…GICS, LSSI…TIGN, SGLT…EFSK, CSNL…LGQL, INLQ…FLGS, GNLN…LCSM, RLQY…IGNC, KLLQ…IGRM, RNLQ…LGKL, DKLV…LLKG, and MSLI…VFVP. N-linked (GlcNAc...) asparagine glycans are attached at residues Asn-140, Asn-171, and Asn-180. 3 N-linked (GlcNAc...) asparagine glycosylation sites follow: Asn-276, Asn-289, and Asn-303. An N-linked (GlcNAc...) asparagine glycan is attached at Asn-363. N-linked (GlcNAc...) asparagine glycosylation occurs at Asn-429. Residues Asn-477 and Asn-498 are each glycosylated (N-linked (GlcNAc...) asparagine). Residues 535–555 form a helical membrane-spanning segment; sequence IVLAVIGSGVAVFVSVTVVVL. Over 556 to 890 the chain is Cytoplasmic; that stretch reads LFMMREKQEK…EMLQEVKQIK (335 aa). In terms of domain architecture, Protein kinase spans 608–886; sequence MKESNKLSTG…KKVVEMLQEV (279 aa). Residues 614–622 and Lys-636 contribute to the ATP site; that span reads LSTGTFSSV. Asp-735 functions as the Proton acceptor in the catalytic mechanism.

Belongs to the protein kinase superfamily. Tyr protein kinase family. As to expression, expressed in the vascular strands of cotyledons, the shoot apex, hypocotyls, roots, leaves, stems and flowers.

The protein resides in the cell membrane. The catalysed reaction is L-tyrosyl-[protein] + ATP = O-phospho-L-tyrosyl-[protein] + ADP + H(+). Its function is as follows. Leucine-rich repeat receptor-like protein kinase that may play a role in vascular tissues development. This chain is Leucine-rich repeat receptor-like tyrosine-protein kinase PXC3, found in Arabidopsis thaliana (Mouse-ear cress).